We begin with the raw amino-acid sequence, 314 residues long: Small ribosomal subunit protein uS11m (314 aa).

The transit peptide at 1 to 37 (MNGVSRHLRASSLLSLIRSYGGINSVCRFSSQSDGFS) directs the protein to the mitochondrion. Residues 34–138 (DGFSGGRFRE…GSGFSAPSLS (105 aa)) are disordered. Positions 50–63 (ESANNSGLSNTGRI) are enriched in polar residues. Positions 103–114 (SSLRSRLPNSLP) are enriched in low complexity.

It belongs to the universal ribosomal protein uS11 family. In terms of assembly, component of the mitochondrial ribosome small subunit (28S) which comprises a 12S rRNA and about 30 distinct proteins.

It is found in the mitochondrion. Functionally, required for karyogamy during female gametophyte development, when the two polar nuclei fuse to form the diploid central cell nucleus. The chain is Small ribosomal subunit protein uS11m from Arabidopsis thaliana (Mouse-ear cress).